The following is a 359-amino-acid chain: Probable ribonucleotide transport ATP-binding protein mkl (359 aa).

One can recognise an ABC transporter domain in the interval 28–264 (IEVNGLTKSF…DEPVVRQFLN (237 aa)). 60–67 (GPSGTGKS) contributes to the ATP binding site.

Belongs to the ABC transporter superfamily.

Not known, could be involved in the transport of ribonucleotides. This is Probable ribonucleotide transport ATP-binding protein mkl (mkl) from Mycobacterium bovis (strain ATCC BAA-935 / AF2122/97).